A 153-amino-acid polypeptide reads, in one-letter code: FAD synthase (153 aa).

ATP is bound by residues 9-10, 14-17, asparagine 92, and tyrosine 119; these read TF and HPGH.

The protein belongs to the archaeal FAD synthase family. As to quaternary structure, homodimer. A divalent metal cation serves as cofactor.

It catalyses the reaction FMN + ATP + H(+) = FAD + diphosphate. It functions in the pathway cofactor biosynthesis; FAD biosynthesis; FAD from FMN: step 1/1. Its function is as follows. Catalyzes the transfer of the AMP portion of ATP to flavin mononucleotide (FMN) to produce flavin adenine dinucleotide (FAD) coenzyme. The polypeptide is FAD synthase (Methanosphaerula palustris (strain ATCC BAA-1556 / DSM 19958 / E1-9c)).